The following is a 152-amino-acid chain: Conglutin delta 1 (152 aa).

Positions 1-22 are cleaved as a signal peptide; that stretch reads MAKLTILIALVAALVLVVHTSA. 4 disulfide bridges follow: C30–C101, C42–C89, C90–C137, and C103–C145.

This sequence belongs to the 2S seed storage albumins family. As to quaternary structure, heterodimer of a small chain and a large chain; disulfide-linked. Expressed in developing cotyledons and in the embryonic axis of germinating seeds.

Its subcellular location is the endoplasmic reticulum. In Lupinus angustifolius (Narrow-leaved blue lupine), this protein is Conglutin delta 1.